Consider the following 199-residue polypeptide: Transgelin-3 (199 aa).

The 113-residue stretch at 24-136 (ADLENKLVDW…RTLMALGSVA (113 aa)) folds into the Calponin-homology (CH) domain. Ser163 bears the Phosphoserine mark. The Calponin-like repeat unit spans residues 174–199 (IGLQMGSNKGASQAGMTGYGMPRQIM). Residues 178 to 188 (MGSNKGASQAG) are compositionally biased toward polar residues. Residues 178-199 (MGSNKGASQAGMTGYGMPRQIM) are disordered.

Belongs to the calponin family.

This is Transgelin-3 (TAGLN3) from Bos taurus (Bovine).